We begin with the raw amino-acid sequence, 180 residues long: Major urinary protein 1 (180 aa).

The first 18 residues, 1–18, serve as a signal peptide directing secretion; that stretch reads MKMLLLLCLGLTLVCVHA. A disulfide bridge links Cys82 with Cys175.

The protein belongs to the calycin superfamily. Lipocalin family. As to expression, abundant in the urine of adult male mice but absent from that of females.

The protein localises to the secreted. Binds pheromones that are released from drying urine of males. These pheromones affect the sexual behavior of females. The sequence is that of Major urinary protein 1 (Mup1) from Mus musculus (Mouse).